A 354-amino-acid chain; its full sequence is MRVGLLFGGCSGEHEVSIKSAQAIAKALASDDNQTKYQVSPFYIQKNGVWLGPDVSQQVLDQGVPWGDQPVTAGQRWQFPPEAARMEVWFPILHGPNGEDGTVQGLFSLMQVPYVGSGVLGSCVGMDKLAMKMVFERAGLPQVNYMGVERGEIWSNPCVFPALCEKIEAQVGYPCFVKPANLGSSVGIAKVRNRSELEAALDNAASYDRRIIVEAGLTDIREVECAVLGNENPQASVVGEITYDSDFYDYETKYTDGRSQMHIPANLPKAVVNQIQTMAIQAFKAVDAAGLGRLDFFYQPTTGQIVINEINTLPGFTAFSMYPELWRASGVEFPSLVDRLLQLALDYHGRPGHQ.

Residues 132–342 (KMVFERAGLP…FPSLVDRLLQ (211 aa)) enclose the ATP-grasp domain. 168-223 (EAQVGYPCFVKPANLGSSVGIAKVRNRSELEAALDNAASYDRRIIVEAGLTDIREV) is an ATP binding site. Positions 295, 309, and 311 each coordinate Mg(2+).

It belongs to the D-alanine--D-alanine ligase family. The cofactor is Mg(2+). It depends on Mn(2+) as a cofactor.

The protein localises to the cytoplasm. It carries out the reaction 2 D-alanine + ATP = D-alanyl-D-alanine + ADP + phosphate + H(+). It functions in the pathway cell wall biogenesis; peptidoglycan biosynthesis. Cell wall formation. In Synechocystis sp. (strain ATCC 27184 / PCC 6803 / Kazusa), this protein is D-alanine--D-alanine ligase.